The primary structure comprises 596 residues: Transcription factor COE3 (596 aa).

The interval 1 to 22 (MFGIQENIPRGGTTMKEEPLGS) is disordered. Residues 63 to 66 (RKSN) form an interaction with DNA region. The C5-type zinc-finger motif lies at 151–170 (CRVLLTHEIMCSRCCDKKSC). Interaction with DNA stretches follow at residues 197–204 (NCLKNAGN) and 236–239 (NNSK). The region spanning 263 to 346 (PCIKAISPSE…KGAPGRFVYT (84 aa)) is the IPT/TIG domain. Residues 451-483 (TSQANDQVGYSRNTSSVSPRGYVPSSTPQQSNY) form a disordered region.

It belongs to the COE family. In terms of assembly, forms either a homodimer or a heterodimer with a related family member. In terms of tissue distribution, expressed in brain.

It is found in the nucleus. In terms of biological role, transcriptional activator. Recognizes variations of the palindromic sequence 5'-ATTCCCNNGGGAATT-3'. The sequence is that of Transcription factor COE3 (EBF3) from Homo sapiens (Human).